The following is a 461-amino-acid chain: D-phenylhydantoinase (461 aa).

3 residues coordinate a divalent metal cation: histidine 59, histidine 61, and lysine 151. Lysine 151 is subject to N6-carboxylysine. Tyrosine 156 lines the substrate pocket. Positions 182 and 239 each coordinate a divalent metal cation. Serine 286 contributes to the substrate binding site. Aspartate 313 provides a ligand contact to a divalent metal cation. Asparagine 335 contributes to the substrate binding site.

The protein belongs to the metallo-dependent hydrolases superfamily. Hydantoinase/dihydropyrimidinase family. In terms of assembly, homotetramer. The cofactor is a divalent metal cation. In terms of processing, carboxylation allows a single lysine to coordinate two divalent metal cations.

It catalyses the reaction D-5-phenylhydantoin + H2O = N-carbamoyl-D-phenylglycine + H(+). Functionally, catalyzes the stereospecific hydrolysis of the cyclic amide bond of D-hydantoin derivatives with an aromatic side chains at the 5'-position. Has no activity on dihydropyrimidines. The physiological function is unknown. This Escherichia coli O6:K15:H31 (strain 536 / UPEC) protein is D-phenylhydantoinase.